Here is a 198-residue protein sequence, read N- to C-terminus: Glycerol-3-phosphate acyltransferase (198 aa).

A run of 6 helical transmembrane segments spans residues 5-25 (YLIILGIVCYFIGNISGSIAI), 55-75 (VGLATFLIDFFKGLLCAYLGF), 79-99 (GSLGILVCGLLCVIGHILPVL), 114-134 (VLLFAQPLQVLILLILFLIVV), 139-159 (YVSLGSVLGCISAVIYGLIYI), and 164-184 (YIGLIYILLGIISLFKHRSNI).

Belongs to the PlsY family. Probably interacts with PlsX.

Its subcellular location is the cell membrane. It catalyses the reaction an acyl phosphate + sn-glycerol 3-phosphate = a 1-acyl-sn-glycero-3-phosphate + phosphate. It functions in the pathway lipid metabolism; phospholipid metabolism. Its function is as follows. Catalyzes the transfer of an acyl group from acyl-phosphate (acyl-PO(4)) to glycerol-3-phosphate (G3P) to form lysophosphatidic acid (LPA). This enzyme utilizes acyl-phosphate as fatty acyl donor, but not acyl-CoA or acyl-ACP. The chain is Glycerol-3-phosphate acyltransferase from Finegoldia magna (strain ATCC 29328 / DSM 20472 / WAL 2508) (Peptostreptococcus magnus).